The sequence spans 200 residues: GTP cyclohydrolase-2 (200 aa).

50 to 54 (RVHSE) contributes to the GTP binding site. Residues cysteine 55, cysteine 66, and cysteine 68 each coordinate Zn(2+). Residues glutamine 71, 93 to 95 (EGR), and threonine 115 each bind GTP. The active-site Proton acceptor is aspartate 127. The Nucleophile role is filled by arginine 129. Positions 150 and 155 each coordinate GTP.

It belongs to the GTP cyclohydrolase II family. Zn(2+) is required as a cofactor.

The catalysed reaction is GTP + 4 H2O = 2,5-diamino-6-hydroxy-4-(5-phosphoribosylamino)-pyrimidine + formate + 2 phosphate + 3 H(+). It participates in cofactor biosynthesis; riboflavin biosynthesis; 5-amino-6-(D-ribitylamino)uracil from GTP: step 1/4. Its function is as follows. Catalyzes the conversion of GTP to 2,5-diamino-6-ribosylamino-4(3H)-pyrimidinone 5'-phosphate (DARP), formate and pyrophosphate. The protein is GTP cyclohydrolase-2 of Acinetobacter baumannii (strain AB307-0294).